Reading from the N-terminus, the 426-residue chain is Serine--tRNA ligase (426 aa).

235 to 237 (TAE) contributes to the L-serine binding site. ATP is bound at residue 266 to 268 (RRE). Glutamate 289 lines the L-serine pocket. 353–356 (EISS) provides a ligand contact to ATP. Serine 389 contacts L-serine.

This sequence belongs to the class-II aminoacyl-tRNA synthetase family. Type-1 seryl-tRNA synthetase subfamily. In terms of assembly, homodimer. The tRNA molecule binds across the dimer.

Its subcellular location is the cytoplasm. It carries out the reaction tRNA(Ser) + L-serine + ATP = L-seryl-tRNA(Ser) + AMP + diphosphate + H(+). The enzyme catalyses tRNA(Sec) + L-serine + ATP = L-seryl-tRNA(Sec) + AMP + diphosphate + H(+). It participates in aminoacyl-tRNA biosynthesis; selenocysteinyl-tRNA(Sec) biosynthesis; L-seryl-tRNA(Sec) from L-serine and tRNA(Sec): step 1/1. In terms of biological role, catalyzes the attachment of serine to tRNA(Ser). Is also able to aminoacylate tRNA(Sec) with serine, to form the misacylated tRNA L-seryl-tRNA(Sec), which will be further converted into selenocysteinyl-tRNA(Sec). The chain is Serine--tRNA ligase from Trichormus variabilis (strain ATCC 29413 / PCC 7937) (Anabaena variabilis).